We begin with the raw amino-acid sequence, 343 residues long: Pseudaminic acid synthase (343 aa).

Residues 287–343 (SLYASKDIKKGEIFSEENVKSVRPSFGLHPKFYQELLGKKASKDIEFGDALKESDFR) enclose the AFP-like domain.

This sequence belongs to the pseudaminic acid synthase family. Requires a divalent metal cation as cofactor.

The catalysed reaction is 2,4-diacetamido-2,4,6-trideoxy-beta-L-altrose + phosphoenolpyruvate + H2O = pseudaminate + phosphate. In terms of biological role, catalyzes the fifth step in the biosynthesis of pseudaminic acid, a sialic-acid-like sugar that is used to modify flagellin. Catalyzes the condensation of phosphoenolpyruvate with 2,4-diacetamido-2,4,6-trideoxy-beta-l-altropyranose, forming pseudaminic acid. This is Pseudaminic acid synthase (pseI) from Campylobacter jejuni subsp. jejuni serotype O:23/36 (strain 81-176).